We begin with the raw amino-acid sequence, 150 residues long: Large ribosomal subunit protein bL9 (150 aa).

It belongs to the bacterial ribosomal protein bL9 family.

In terms of biological role, binds to the 23S rRNA. This Streptococcus gordonii (strain Challis / ATCC 35105 / BCRC 15272 / CH1 / DL1 / V288) protein is Large ribosomal subunit protein bL9.